We begin with the raw amino-acid sequence, 565 residues long: Probable transcription factor lepB (565 aa).

Positions 52–259 are fungal specific transcription factor domain; the sequence is KRYAEDVTYL…PRNLDDRDLD (208 aa).

It localises to the nucleus. Probable transcription factor; part of the gene cluster 23 that mediates the biosynthesis of a family of 2-pyridones known as leporins. The protein is Probable transcription factor lepB of Aspergillus flavus (strain ATCC 200026 / FGSC A1120 / IAM 13836 / NRRL 3357 / JCM 12722 / SRRC 167).